Consider the following 199-residue polypeptide: Nucleoside triphosphate pyrophosphatase (199 aa).

The active-site Proton acceptor is the aspartate 76.

The protein belongs to the Maf family. The cofactor is a divalent metal cation.

The protein resides in the cytoplasm. The enzyme catalyses a ribonucleoside 5'-triphosphate + H2O = a ribonucleoside 5'-phosphate + diphosphate + H(+). It carries out the reaction a 2'-deoxyribonucleoside 5'-triphosphate + H2O = a 2'-deoxyribonucleoside 5'-phosphate + diphosphate + H(+). In terms of biological role, nucleoside triphosphate pyrophosphatase. May have a dual role in cell division arrest and in preventing the incorporation of modified nucleotides into cellular nucleic acids. This is Nucleoside triphosphate pyrophosphatase from Ruegeria sp. (strain TM1040) (Silicibacter sp.).